The chain runs to 118 residues: Large ribosomal subunit protein bL20 (118 aa).

This sequence belongs to the bacterial ribosomal protein bL20 family.

Binds directly to 23S ribosomal RNA and is necessary for the in vitro assembly process of the 50S ribosomal subunit. It is not involved in the protein synthesizing functions of that subunit. The chain is Large ribosomal subunit protein bL20 from Pseudomonas aeruginosa (strain LESB58).